The primary structure comprises 395 residues: Ribosomal RNA small subunit methyltransferase H (395 aa).

S-adenosyl-L-methionine contacts are provided by residues 101–103, Asp120, Tyr147, Asp171, and Gln178; that span reads GGH.

It belongs to the methyltransferase superfamily. RsmH family.

Its subcellular location is the cytoplasm. The catalysed reaction is cytidine(1402) in 16S rRNA + S-adenosyl-L-methionine = N(4)-methylcytidine(1402) in 16S rRNA + S-adenosyl-L-homocysteine + H(+). Specifically methylates the N4 position of cytidine in position 1402 (C1402) of 16S rRNA. In Mycobacterium marinum (strain ATCC BAA-535 / M), this protein is Ribosomal RNA small subunit methyltransferase H.